A 453-amino-acid chain; its full sequence is Glutamate-rich protein 5 (453 aa).

Disordered stretches follow at residues 1 to 38 (MGCS…ALGR), 66 to 377 (NGVQ…EHPA), and 394 to 453 (TNEE…HSML). Over residues 11 to 21 (AGDDNRLRSAT) the composition is skewed to basic and acidic residues. The residue at position 155 (Ser-155) is a Phosphoserine. Polar residues-rich tracts occupy residues 230–243 (LQET…SQPL) and 271–283 (QETL…SQLR). Basic and acidic residues-rich tracts occupy residues 305-332 (EEEK…EHGG), 364-374 (IQPERTVESME), and 394-403 (TNEEDQHIEG). Over residues 404-413 (ETGETVETEM) the composition is skewed to acidic residues. The segment covering 414–424 (ESEKVSEGAET) has biased composition (basic and acidic residues).

The sequence is that of Glutamate-rich protein 5 (ERICH5) from Bos taurus (Bovine).